Here is a 321-residue protein sequence, read N- to C-terminus: Transmembrane protein fend (321 aa).

Positions 1 to 18 (MFHSLVLMACALAALSVA) are cleaved as a signal peptide. The Extracellular portion of the chain corresponds to 19 to 261 (QGAGSARSKS…ALPTPSELGG (243 aa)). The helical transmembrane segment at 262–282 (VVYPAFGALAFFLALLVMFLF) threads the bilayer. The Cytoplasmic segment spans residues 283–321 (LRPQRKRFPLDADSADTATLIGRSSSSSRNSMDASTLHV).

It localises to the membrane. Functionally, involved in the normal targeting of ventral muscle, muscle 12, by motoneurons. May function as an axon guidance molecule involved in neuromuscular specificity. In Drosophila melanogaster (Fruit fly), this protein is Transmembrane protein fend (fend).